The primary structure comprises 576 residues: Aspartate--tRNA ligase (576 aa).

Glu173 serves as a coordination point for L-aspartate. An aspartate region spans residues 197–200 (QLFK). Arg219 serves as a coordination point for L-aspartate. Residues 219 to 221 (RDE) and Gln228 each bind ATP. His438 contacts L-aspartate. ATP is bound at residue Glu470. Arg477 contributes to the L-aspartate binding site. 522–525 (GLDR) is an ATP binding site.

The protein belongs to the class-II aminoacyl-tRNA synthetase family. Type 1 subfamily. In terms of assembly, homodimer.

The protein localises to the cytoplasm. The catalysed reaction is tRNA(Asp) + L-aspartate + ATP = L-aspartyl-tRNA(Asp) + AMP + diphosphate. In terms of biological role, catalyzes the attachment of L-aspartate to tRNA(Asp) in a two-step reaction: L-aspartate is first activated by ATP to form Asp-AMP and then transferred to the acceptor end of tRNA(Asp). This is Aspartate--tRNA ligase from Aster yellows witches'-broom phytoplasma (strain AYWB).